Here is a 290-residue protein sequence, read N- to C-terminus: UPF0750 membrane protein YpjC (290 aa).

Transmembrane regions (helical) follow at residues 9 to 29 (NIFF…HFNM), 47 to 67 (ALFH…IFFI), 75 to 95 (TMFV…SIFQ), 106 to 126 (DLAL…GIIF), 146 to 166 (FGIP…ILSL), and 179 to 199 (LVAV…GYAA).

Belongs to the UPF0750 family.

It localises to the cell membrane. The protein is UPF0750 membrane protein YpjC (ypjC) of Bacillus subtilis (strain 168).